The sequence spans 380 residues: O-methyltransferase ucdC (380 aa).

S-adenosyl-L-methionine is bound by residues 222–223, aspartate 247, and arginine 283; that span reads GG. The active-site Proton acceptor is the histidine 287.

Belongs to the class I-like SAM-binding methyltransferase superfamily. Cation-independent O-methyltransferase family. COMT subfamily.

The protein operates within secondary metabolite biosynthesis. In terms of biological role, nonribosomal peptide synthetase that mediates the biosynthesis of usterphenyllins and uscandidusins, p-terphenyl derivatives. Within the pathway, ucdC catalyzes O-methylation of the terphenyl triol intermediate produced by ucdB to yield terphenyllin carrying two methoxy moieties at C-9 and C-12. The pathway begin with the biosynthesis of 4-hydroxyphenylpyruvate (HPPA) from L-tyrosine, possibly by the aminotransferase ucdG. The nonribosomal peptide synthetase ucdA then condenses two HPPA units to produce atromentin. The key step in this pathway is the reduction and dehydration of atromentin to form a terphenyl triol intermediate, performed by the NAD-dependent dehydrogenase ucdB. Further O-methylation by the methyltransferase ucdC forms terphenyllin carrying two methoxy moieties at C-9 and C-12, and subsequent dihydroxylation at C-3 of ring A and C-15 of ring C by the flavin-dependent oxygenase ucdD leads to 3,15-dihydroxyterphenyllin. Prenylation by ucdE at position C-5 of ring A forms usterphenyllin B, and is followed by a second prenylation at position C-14 of ring C to form usterphenyllin A. The following furan ring formation that leads to uscandidusins A and B was proven to be an unexpected spontaneous non-enzymatic reaction. The protein is O-methyltransferase ucdC of Aspergillus ustus.